The following is a 299-amino-acid chain: Cysteine synthase B (299 aa).

An N6-(pyridoxal phosphate)lysine modification is found at lysine 40. Residues asparagine 70, 174 to 178 (GTGGT), and serine 261 contribute to the pyridoxal 5'-phosphate site.

Belongs to the cysteine synthase/cystathionine beta-synthase family. The cofactor is pyridoxal 5'-phosphate.

It catalyses the reaction O-acetyl-L-serine + hydrogen sulfide = L-cysteine + acetate. Its pathway is amino-acid biosynthesis; L-cysteine biosynthesis; L-cysteine from L-serine: step 2/2. In Campylobacter jejuni subsp. jejuni serotype O:2 (strain ATCC 700819 / NCTC 11168), this protein is Cysteine synthase B (cysM).